Reading from the N-terminus, the 638-residue chain is Probable potassium transport system protein Kup (638 aa).

The interval Met-1–His-20 is disordered. 12 helical membrane passes run Ile-24–Leu-44, Ile-67–Ile-87, Ala-115–Ile-135, Pro-153–Met-173, Val-181–Ile-201, Leu-228–Tyr-248, Trp-263–Leu-283, Leu-301–Ile-321, Ile-353–Phe-373, Ala-382–Val-402, Ala-413–Val-433, and Ile-435–Thr-455.

This sequence belongs to the HAK/KUP transporter (TC 2.A.72) family.

It localises to the cell inner membrane. The enzyme catalyses K(+)(in) + H(+)(in) = K(+)(out) + H(+)(out). Its function is as follows. Transport of potassium into the cell. Likely operates as a K(+):H(+) symporter. This Azoarcus sp. (strain BH72) protein is Probable potassium transport system protein Kup.